The primary structure comprises 472 residues: Methanethiol oxidase (472 aa).

Residue Ala-2 is modified to N-acetylalanine. A phosphoserine mark is found at Ser-111 and Ser-467.

The protein belongs to the selenium-binding protein family. Interacts with USP33. In terms of processing, the N-terminus is blocked. Highly expressed in liver, kidney and, to a lesser extent, lung.

It localises to the nucleus. The protein resides in the cytoplasm. Its subcellular location is the cytosol. It is found in the membrane. It catalyses the reaction methanethiol + O2 + H2O = hydrogen sulfide + formaldehyde + H2O2 + H(+). Its pathway is organosulfur degradation. Catalyzes the oxidation of methanethiol, an organosulfur compound known to be produced in substantial amounts by gut bacteria. Selenium-binding protein which may be involved in the sensing of reactive xenobiotics in the cytoplasm. May be involved in intra-Golgi protein transport. The sequence is that of Methanethiol oxidase (Selenbp1) from Mus musculus (Mouse).